The primary structure comprises 469 residues: Adenosylhomocysteinase (469 aa).

Positions 63, 139, and 164 each coordinate substrate. Position 165 to 167 (165 to 167 (TTT)) interacts with NAD(+). 2 residues coordinate substrate: K194 and D198. NAD(+) is bound by residues N199, 228-233 (GYGDVG), E251, N300, 321-323 (IGH), and N375.

This sequence belongs to the adenosylhomocysteinase family. It depends on NAD(+) as a cofactor.

The protein localises to the cytoplasm. The catalysed reaction is S-adenosyl-L-homocysteine + H2O = L-homocysteine + adenosine. It functions in the pathway amino-acid biosynthesis; L-homocysteine biosynthesis; L-homocysteine from S-adenosyl-L-homocysteine: step 1/1. Functionally, may play a key role in the regulation of the intracellular concentration of adenosylhomocysteine. The protein is Adenosylhomocysteinase of Pseudomonas aeruginosa (strain UCBPP-PA14).